Here is a 585-residue protein sequence, read N- to C-terminus: MNLFTDFEARINRILESIEIIREKRSELDFGRINVEPPRDASHGDVATNAAMVLAKPLGMNPRALADLIVDKLGQDPEVAGVSVAGPGFINVRLSVSYWQKLLAAITRAGVDYGRSTFGAGRKINVEYVSANPTGPMHVGHCRGAVVGDALANLLAFAGYDVTKEYYINDAGSQIEVLARSAFLRYRQALGEDIAEIPAGLYPGDYLVPVGEALADEYGTSLRIMPEDKWVPLVKERVIDAMMAMIREDLAALNVNHDVFFSERALHDNGAARIRTAINDLTFKGHVYKGTLPPPKGQLPEDWEDREQTLFRSTEVGDDIDRPLIKSDGSYTYFAADVAYFKDKFDRGFHEMIYVLGADHGGYVKRLEALARAISGGTAKLTVLLCQLVKLYRNGEPVKMSKRSGDFVTLRDVVDEVGRDPVRFMMLYRKSSEPLDFDFAKVTEQSKDNPVFYVQYAHARCRSVFRQAAEAFPDLDLSSVDFAAAAGAIVDPTEMQLVAKLAEYPRVVEAAALSHEPHRIAFYLYDLAAVFHGHWNKGKENPELRFVNDKNRELSIARLGLVHAVASVLKSGLSITGTSAPDEMR.

A 'HIGH' region motif is present at residues 131–141; it reads ANPTGPMHVGH.

This sequence belongs to the class-I aminoacyl-tRNA synthetase family. Monomer.

It is found in the cytoplasm. The enzyme catalyses tRNA(Arg) + L-arginine + ATP = L-arginyl-tRNA(Arg) + AMP + diphosphate. This Rhizobium meliloti (strain 1021) (Ensifer meliloti) protein is Arginine--tRNA ligase.